A 600-amino-acid polypeptide reads, in one-letter code: Elongation factor 4 (600 aa).

One can recognise a tr-type G domain in the interval Lys5 to Lys187. GTP-binding positions include Asp17–Thr22 and Asn134–Asp137.

Belongs to the TRAFAC class translation factor GTPase superfamily. Classic translation factor GTPase family. LepA subfamily.

It is found in the cell inner membrane. It carries out the reaction GTP + H2O = GDP + phosphate + H(+). Its function is as follows. Required for accurate and efficient protein synthesis under certain stress conditions. May act as a fidelity factor of the translation reaction, by catalyzing a one-codon backward translocation of tRNAs on improperly translocated ribosomes. Back-translocation proceeds from a post-translocation (POST) complex to a pre-translocation (PRE) complex, thus giving elongation factor G a second chance to translocate the tRNAs correctly. Binds to ribosomes in a GTP-dependent manner. The polypeptide is Elongation factor 4 (Rickettsia akari (strain Hartford)).